A 155-amino-acid polypeptide reads, in one-letter code: Large ribosomal subunit protein bL17 (155 aa).

It belongs to the bacterial ribosomal protein bL17 family. In terms of assembly, part of the 50S ribosomal subunit. Contacts protein L32.

The polypeptide is Large ribosomal subunit protein bL17 (Bifidobacterium adolescentis (strain ATCC 15703 / DSM 20083 / NCTC 11814 / E194a)).